The chain runs to 174 residues: Ubiquinone biosynthesis accessory factor UbiT (174 aa).

An SCP2 domain is found at 45-133 (LDDGELEFLE…LGLYVKNLMD (89 aa)).

The protein belongs to the UbiT family.

The protein operates within cofactor biosynthesis; ubiquinone biosynthesis. Its function is as follows. Required for O(2)-independent ubiquinone (coenzyme Q) biosynthesis. Likely functions as an accessory factor. The polypeptide is Ubiquinone biosynthesis accessory factor UbiT (Escherichia coli O157:H7).